A 400-amino-acid chain; its full sequence is MGGWSSKPRKGMGTNLSVPNPLGFFPDHQLDPAFKANSENPDWDLNPHKDNWPDAHKVGVGAFGPGFTPPHGGLLGWSPQAQGILTSVPAAPPPASTNRQSGRQPTPLSPPLRDTHPQAVQWNSTTFHQTLQDPRVRALYLPAGGSSSGTVSPAQNTVSAISSILSTTGDPVPNMENIASGLLGPLLVLQAGFFSLTKILTIPQSLDSWWTSLNFLGGTPVCLGQNSQSQISSHSPTCCPPICPGYRWMCLRRFIIFLCILLLCLIFLLVLLDYQGMLPVCPLIPGSSTTSTGPCKTCTTPAQGTSMFPSCCCTKPTDGNCTCIPIPSSWAFAKYLWEWASVRFSWLSLLVPFVQWFVGLSPTVWLSVIWMMWFWGPSLYNILSPFMPLLPIFLCLWVYM.

Disordered regions lie at residues 1-50 (MGGW…PHKD) and 84-116 (ILTS…RDTH). A lipid anchor (N-myristoyl glycine; by host) is attached at Gly-2. Residues 2–119 (GGWSSKPRKG…PPLRDTHPQA (118 aa)) are pre-S1. Positions 2–174 (GGWSSKPRKG…LSTTGDPVPN (173 aa)) are pre-S. Topologically, residues 2 to 181 (GGWSSKPRKG…VPNMENIASG (180 aa)) are virion surface; in external conformation. The Intravirion; in internal conformation segment spans residues 2-253 (GGWSSKPRKG…PGYRWMCLRR (252 aa)). Over residues 96 to 106 (STNRQSGRQPT) the composition is skewed to polar residues. A pre-S2 region spans residues 120–174 (VQWNSTTFHQTLQDPRVRALYLPAGGSSSGTVSPAQNTVSAISSILSTTGDPVPN). The helical transmembrane segment at 182–202 (LLGPLLVLQAGFFSLTKILTI) threads the bilayer. The Intravirion; in external conformation segment spans residues 203 to 253 (PQSLDSWWTSLNFLGGTPVCLGQNSQSQISSHSPTCCPPICPGYRWMCLRR). Residues 254-274 (FIIFLCILLLCLIFLLVLLDY) traverse the membrane as a helical segment. Residues 275–348 (QGMLPVCPLI…WASVRFSWLS (74 aa)) are Virion surface-facing. A glycan (N-linked (GlcNAc...) asparagine; by host) is linked at Asn-320. Residues 349-369 (LLVPFVQWFVGLSPTVWLSVI) form a helical membrane-spanning segment. Over 370–375 (WMMWFW) the chain is Intravirion. Residues 376–398 (GPSLYNILSPFMPLLPIFLCLWV) traverse the membrane as a helical segment. The Virion surface portion of the chain corresponds to 399–400 (YM).

This sequence belongs to the orthohepadnavirus major surface antigen family. Li-HBsAg interacts with capsid protein and with HDV Large delta antigen. Isoform M associates with host chaperone CANX through its pre-S2 N glycan. This association may be essential for M proper secretion. Interacts (via its myristoylated pre-S1 region) with the host SLC10A1/NTCP; this interaction is essential for viral entry. In terms of processing, isoform M is N-terminally acetylated by host at a ratio of 90%, and N-glycosylated by host at the pre-S2 region. Myristoylated; this modification is essential for its interaction with the host protein SLC10A1/NTCP.

Its subcellular location is the virion membrane. The large envelope protein exists in two topological conformations, one which is termed 'external' or Le-HBsAg and the other 'internal' or Li-HBsAg. In its external conformation the protein attaches the virus to cell receptors and thereby initiating infection. This interaction determines the species specificity and liver tropism. This attachment induces virion internalization predominantly through caveolin-mediated endocytosis. The large envelope protein also assures fusion between virion membrane and endosomal membrane. In its internal conformation the protein plays a role in virion morphogenesis and mediates the contact with the nucleocapsid like a matrix protein. In terms of biological role, the middle envelope protein plays an important role in the budding of the virion. It is involved in the induction of budding in a nucleocapsid independent way. In this process the majority of envelope proteins bud to form subviral lipoprotein particles of 22 nm of diameter that do not contain a nucleocapsid. The polypeptide is Large envelope protein (Homo sapiens (Human)).